Reading from the N-terminus, the 100-residue chain is MNGASPAHSLVSTTAVAGGGGSSGAAAGLDDFHFPPDIPSMQERKDEAMRVLKADLMTELDKEVKSLEEDSWMFEGPRSRIHLISRRGNFLKKGGEVKLW.

The tract at residues 1–40 (MNGASPAHSLVSTTAVAGGGGSSGAAAGLDDFHFPPDIPS) is disordered.

In terms of assembly, interacts with CDC27B and CYCA2-3. In terms of tissue distribution, expressed in embryos, germinating seeds, hypocotyls and pollen grains.

In terms of biological role, plays an important role in organ size control. Acts as negative regulator of the anaphase-promoting complex/cyclosome (APC/C). Regulates cell proliferation during early development by targeting CYCA2-3 for APC/C-mediated degradation. Required for mitosis I during pollen microspore development. The protein is Protein SAMBA of Arabidopsis thaliana (Mouse-ear cress).